The following is a 353-amino-acid chain: Photosystem II protein D1 (353 aa).

T2 is subject to N-acetylthreonine. T2 is modified (phosphothreonine). 3 helical membrane-spanning segments follow: residues 29-46 (YIGW…TATS), 118-133 (HFLL…EWEL), and 142-156 (WIAV…AATA). Chlorophyll a is bound at residue H118. A pheophytin a-binding site is contributed by Y126. The [CaMn4O5] cluster site is built by D170 and E189. Residues 197 to 218 (FHMLGVAGVFGGSLFSAMHGSL) traverse the membrane as a helical segment. H198 is a binding site for chlorophyll a. Residues H215 and 264 to 265 (SF) each bind a quinone. Residue H215 coordinates Fe cation. H272 lines the Fe cation pocket. Residues 274–288 (FLAAWPVVGIWFTAL) traverse the membrane as a helical segment. The [CaMn4O5] cluster site is built by H332, E333, D342, and A344. Positions 345–353 (ALEVPSLNG) are excised as a propeptide.

The protein belongs to the reaction center PufL/M/PsbA/D family. PSII is composed of 1 copy each of membrane proteins PsbA, PsbB, PsbC, PsbD, PsbE, PsbF, PsbH, PsbI, PsbJ, PsbK, PsbL, PsbM, PsbT, PsbX, PsbY, PsbZ, Psb30/Ycf12, at least 3 peripheral proteins of the oxygen-evolving complex and a large number of cofactors. It forms dimeric complexes. The cofactor is The D1/D2 heterodimer binds P680, chlorophylls that are the primary electron donor of PSII, and subsequent electron acceptors. It shares a non-heme iron and each subunit binds pheophytin, quinone, additional chlorophylls, carotenoids and lipids. D1 provides most of the ligands for the Mn4-Ca-O5 cluster of the oxygen-evolving complex (OEC). There is also a Cl(-1) ion associated with D1 and D2, which is required for oxygen evolution. The PSII complex binds additional chlorophylls, carotenoids and specific lipids.. In terms of processing, tyr-161 forms a radical intermediate that is referred to as redox-active TyrZ, YZ or Y-Z. C-terminally processed by CTPA; processing is essential to allow assembly of the oxygen-evolving complex and thus photosynthetic growth.

Its subcellular location is the plastid. The protein resides in the chloroplast thylakoid membrane. The enzyme catalyses 2 a plastoquinone + 4 hnu + 2 H2O = 2 a plastoquinol + O2. Its function is as follows. Photosystem II (PSII) is a light-driven water:plastoquinone oxidoreductase that uses light energy to abstract electrons from H(2)O, generating O(2) and a proton gradient subsequently used for ATP formation. It consists of a core antenna complex that captures photons, and an electron transfer chain that converts photonic excitation into a charge separation. The D1/D2 (PsbA/PsbD) reaction center heterodimer binds P680, the primary electron donor of PSII as well as several subsequent electron acceptors. This chain is Photosystem II protein D1, found in Oryza nivara (Indian wild rice).